The following is a 136-amino-acid chain: Probable 5-hydroxyisourate hydrolase ZK697.8 (136 aa).

Residues 1–19 (MIKFLLFLAIAAATVISNA) form the signal peptide. Residues H31, R69, and Y133 each coordinate substrate.

Belongs to the transthyretin family. 5-hydroxyisourate hydrolase subfamily. Homotetramer.

The catalysed reaction is 5-hydroxyisourate + H2O = 5-hydroxy-2-oxo-4-ureido-2,5-dihydro-1H-imidazole-5-carboxylate + H(+). Its function is as follows. Catalyzes the hydrolysis of 5-hydroxyisourate (HIU) to 2-oxo-4-hydroxy-4-carboxy-5-ureidoimidazoline (OHCU). This chain is Probable 5-hydroxyisourate hydrolase ZK697.8, found in Caenorhabditis elegans.